An 83-amino-acid chain; its full sequence is NAD(P)H-quinone oxidoreductase subunit L (83 aa).

2 helical membrane-spanning segments follow: residues 18–38 and 53–73; these read IGGYVALGGLYLVVMPLLLFF and FSVYGLVFFFFPGMIVFAPFL.

It belongs to the complex I NdhL subunit family. As to quaternary structure, NDH-1 can be composed of about 15 different subunits; different subcomplexes with different compositions have been identified which probably have different functions.

Its subcellular location is the cellular thylakoid membrane. The enzyme catalyses a plastoquinone + NADH + (n+1) H(+)(in) = a plastoquinol + NAD(+) + n H(+)(out). It catalyses the reaction a plastoquinone + NADPH + (n+1) H(+)(in) = a plastoquinol + NADP(+) + n H(+)(out). In terms of biological role, NDH-1 shuttles electrons from an unknown electron donor, via FMN and iron-sulfur (Fe-S) centers, to quinones in the respiratory and/or the photosynthetic chain. The immediate electron acceptor for the enzyme in this species is believed to be plastoquinone. Couples the redox reaction to proton translocation, and thus conserves the redox energy in a proton gradient. Cyanobacterial NDH-1 also plays a role in inorganic carbon-concentration. In Synechococcus sp. (strain CC9311), this protein is NAD(P)H-quinone oxidoreductase subunit L.